Reading from the N-terminus, the 503-residue chain is Probable cytochrome P450 303a1 (503 aa).

Heme is bound at residue cysteine 448.

The protein belongs to the cytochrome P450 family. Heme serves as cofactor.

It is found in the endoplasmic reticulum membrane. The protein resides in the microsome membrane. In terms of biological role, may be involved in the metabolism of insect hormones and in the breakdown of synthetic insecticides. The chain is Probable cytochrome P450 303a1 (Cyp303a1) from Drosophila melanogaster (Fruit fly).